We begin with the raw amino-acid sequence, 316 residues long: Cell surface superoxide dismutase [Cu-Zn] 6 (316 aa).

The first 18 residues, 1–18 (MIFIPIIILIYLVSIAAS), serve as a signal peptide directing secretion. Residues His-78, His-80, and His-96 each coordinate Cu cation. Zn(2+) contacts are provided by His-96 and Asp-119. An N-linked (GlcNAc...) asparagine glycan is attached at Asn-128. A Cu cation-binding site is contributed by His-159. Residues Asn-162 and Asn-240 are each glycosylated (N-linked (GlcNAc...) asparagine). A disordered region spans residues 243–263 (DNVYSPEETRPSDQNKKSHRH). Basic and acidic residues predominate over residues 249-258 (EETRPSDQNK). Asn-278 and Asn-281 each carry an N-linked (GlcNAc...) asparagine glycan. Residue Ser-288 is the site of GPI-anchor amidated serine attachment. Residues 289 to 316 (SDCLNDGMMVTGSVFGSLVLGIAAGIFV) constitute a propeptide, removed in mature form.

It belongs to the Cu-Zn superoxide dismutase family. Requires Cu cation as cofactor. Zn(2+) serves as cofactor. The GPI-anchor is attached to the protein in the endoplasmic reticulum and serves to target the protein to the cell surface. There, the glucosamine-inositol phospholipid moiety is cleaved off and the GPI-modified mannoprotein is covalently attached via its lipidless GPI glycan remnant to the 1,6-beta-glucan of the outer cell wall layer.

Its subcellular location is the secreted. It is found in the cell wall. The protein resides in the membrane. The catalysed reaction is 2 superoxide + 2 H(+) = H2O2 + O2. Its function is as follows. Superoxide dismutases serve to convert damaging superoxide radicals, a key form of ROS, to less damaging hydrogen peroxide that can be converted into water by catalase action. May be involved protection against extracellular stress. The chain is Cell surface superoxide dismutase [Cu-Zn] 6 (SOD6) from Candida albicans (strain SC5314 / ATCC MYA-2876) (Yeast).